Here is a 209-residue protein sequence, read N- to C-terminus: Holliday junction branch migration complex subunit RuvA (209 aa).

The domain I stretch occupies residues 1–70 (MINYLKGKTT…EDQQILYGFS (70 aa)). The segment at 71–149 (TDSERDLFRQ…QWEQAIALKT (79 aa)) is domain II. The segment at 150–160 (PVSVGVPSREI) is flexible linker. A domain III region spans residues 160-209 (ILEEVEMTLLALGYTDEEIDQAISAISQDNLLLKNPHVEEWLKSAIAWLS).

The protein belongs to the RuvA family. Homotetramer. Forms an RuvA(8)-RuvB(12)-Holliday junction (HJ) complex. HJ DNA is sandwiched between 2 RuvA tetramers; dsDNA enters through RuvA and exits via RuvB. An RuvB hexamer assembles on each DNA strand where it exits the tetramer. Each RuvB hexamer is contacted by two RuvA subunits (via domain III) on 2 adjacent RuvB subunits; this complex drives branch migration. In the full resolvosome a probable DNA-RuvA(4)-RuvB(12)-RuvC(2) complex forms which resolves the HJ.

It localises to the cytoplasm. Its function is as follows. The RuvA-RuvB-RuvC complex processes Holliday junction (HJ) DNA during genetic recombination and DNA repair, while the RuvA-RuvB complex plays an important role in the rescue of blocked DNA replication forks via replication fork reversal (RFR). RuvA specifically binds to HJ cruciform DNA, conferring on it an open structure. The RuvB hexamer acts as an ATP-dependent pump, pulling dsDNA into and through the RuvAB complex. HJ branch migration allows RuvC to scan DNA until it finds its consensus sequence, where it cleaves and resolves the cruciform DNA. In Gloeothece citriformis (strain PCC 7424) (Cyanothece sp. (strain PCC 7424)), this protein is Holliday junction branch migration complex subunit RuvA.